The chain runs to 172 residues: Calcium channel flower homolog (172 aa).

The Cytoplasmic segment spans residues 1–32 (MSSSGGAPGASASSAPPAQEEGMTWWYRWLCR). Residues 33–53 (LSGVLGAVSCAISGLFNCITI) form a helical membrane-spanning segment. Over 54 to 57 (HPLN) the chain is Extracellular. Residues 58–78 (IAAGVWMIMNAFILLLCEAPF) form a helical membrane-spanning segment. Residues 79 to 102 (CCQFIEFANTVAEKVDRLRSWQKA) are Cytoplasmic-facing. The helical transmembrane segment at 103–123 (VFYCGMAVVPIVISLTLTTLL) threads the bilayer. The Extracellular segment spans residues 124–125 (GN). The helical transmembrane segment at 126–142 (AIAFATGVLYGLSALGK) threads the bilayer. The Cytoplasmic portion of the chain corresponds to 143 to 172 (KGDAISYARIQQQRQQADEEKLAETLEGEL).

The protein belongs to the calcium channel flower family. Interacts with adaptor protein complex 2 (AP-2). In terms of tissue distribution, detected in skin cells at low levels of expression (at protein level).

Its subcellular location is the cell membrane. It is found in the cytoplasmic vesicle. The protein localises to the secretory vesicle. The protein resides in the synaptic vesicle. It localises to the golgi apparatus. Its subcellular location is the vesicle. It is found in the early endosome. The protein localises to the recycling endosome. The protein resides in the endoplasmic reticulum membrane. Its function is as follows. Transmembrane protein which mediates synaptic endocytosis and fitness-based cell culling. In response to different stimulus strengths, controls two major modes of synaptic vesicle (SV) retrieval in hippocampal neurons; Clathrin-mediated endocytosis (CME) in response to mild stimulation and activity-dependent bulk endocytosis (ADBE) in response to strong stimulation. In cytotoxic T-lymphoocytes (CTLs) facilitates calcium-dependent endocytosis of cytotoxic granules at the immuno synapse. Different isoforms work as fitness fingerprints in 'loser' and 'winner' cells and thereby mediate win/lose decisions as part of the cell competition process. Functionally, functions with the other flower isoforms to produce tissue-specific fitness fingerprints that identify unfit or fit cells during cell selection processes in order to maintain tissue health. During cell competition, if levels of this isoform in cells is higher than in the surrounding neighboring cells, the cells are recognized as 'winner' cells, and do not undergo elimination via apoptosis. Functions with the other flower isoforms to produce tissue-specific fitness fingerprints that identify unfit or fit cells during cell selection processes in order to maintain tissue health. During cell competition, if levels of this isoform in unfit cells is higher than in the surrounding neighboring cells, the cells are recognized as 'loser' cells, and undergo elimination via apoptosis to be replaced by the surrounding healthy 'winner' cell population. The chain is Calcium channel flower homolog (CACFD1) from Homo sapiens (Human).